A 58-amino-acid polypeptide reads, in one-letter code: Protein translocase subunit SecE (58 aa).

A helical membrane pass occupies residues 36-56 (ILLIGFIGFLMFAIMSLLPGV).

Belongs to the SecE/SEC61-gamma family. As to quaternary structure, component of the Sec protein translocase complex. Heterotrimer consisting of SecY (alpha), SecG (beta) and SecE (gamma) subunits. The heterotrimers can form oligomers, although 1 heterotrimer is thought to be able to translocate proteins. Interacts with the ribosome. May interact with SecDF, and other proteins may be involved.

The protein resides in the cell membrane. Essential subunit of the Sec protein translocation channel SecYEG. Clamps together the 2 halves of SecY. May contact the channel plug during translocation. In Halorubrum lacusprofundi (strain ATCC 49239 / DSM 5036 / JCM 8891 / ACAM 34), this protein is Protein translocase subunit SecE.